We begin with the raw amino-acid sequence, 35 residues long: Tamulustoxin (35 aa).

3 disulfides stabilise this stretch: Cys2–Cys22, Cys7–Cys31, and Cys11–Cys33.

In terms of tissue distribution, expressed by the venom gland.

It localises to the secreted. In terms of biological role, blocks Kv1.6/KCNA6 potassium channels. This Hottentotta tamulus (Eastern Indian scorpion) protein is Tamulustoxin.